Consider the following 132-residue polypeptide: MSAKGKTGRKKASKGTSNSAKAGLQFPVGRIGRYLKKGKYAKRVGAGAPVYLAAVLEYLCAEILELAGNAARDNKKSRITPRHIQLAVRNDEELNKFLAGVTFASGGVLPNIHNVLLPKKSQLKAGTANQDY.

Residues 1–13 show a composition bias toward basic residues; the sequence is MSAKGKTGRKKAS. Residues 1 to 21 form a disordered region; it reads MSAKGKTGRKKASKGTSNSAK.

This sequence belongs to the histone H2A family. As to quaternary structure, the nucleosome is a histone octamer containing two molecules each of H2A, H2B, H3 and H4 assembled in one H3-H4 heterotetramer and two H2A-H2B heterodimers. The octamer wraps approximately 147 bp of DNA.

It is found in the nucleus. The protein resides in the chromosome. Core component of nucleosome. Nucleosomes wrap and compact DNA into chromatin, limiting DNA accessibility to the cellular machineries which require DNA as a template. Histones thereby play a central role in transcription regulation, DNA repair, DNA replication and chromosomal stability. DNA accessibility is regulated via a complex set of post-translational modifications of histones, also called histone code, and nucleosome remodeling. This Plasmodium falciparum protein is Histone H2A.